The sequence spans 389 residues: Ethanolamine-phosphate cytidylyltransferase (389 aa).

CTP is bound by residues 221-222 (AF), 229-232 (HVDF), Lys-259, 307-310 (HGKT), and 336-340 (SGNDL). A phosphothreonine mark is found at Thr-341 and Thr-342.

Belongs to the cytidylyltransferase family.

The catalysed reaction is phosphoethanolamine + CTP + H(+) = CDP-ethanolamine + diphosphate. It functions in the pathway phospholipid metabolism; phosphatidylethanolamine biosynthesis; phosphatidylethanolamine from ethanolamine: step 2/3. Its function is as follows. Ethanolamine-phosphate cytidylyltransferase that catalyzes the second step in the synthesis of phosphatidylethanolamine (PE) from ethanolamine via the CDP-ethanolamine pathway. Phosphatidylethanolamine is a dominant inner-leaflet phospholipid in cell membranes, where it plays a role in membrane function by structurally stabilizing membrane-anchored proteins, and participates in important cellular processes such as cell division, cell fusion, blood coagulation, and apoptosis. In Bos taurus (Bovine), this protein is Ethanolamine-phosphate cytidylyltransferase (PCYT2).